Reading from the N-terminus, the 101-residue chain is Small ribosomal subunit protein uS10 (101 aa).

It belongs to the universal ribosomal protein uS10 family. In terms of assembly, part of the 30S ribosomal subunit.

Involved in the binding of tRNA to the ribosomes. This is Small ribosomal subunit protein uS10 from Methanocaldococcus jannaschii (strain ATCC 43067 / DSM 2661 / JAL-1 / JCM 10045 / NBRC 100440) (Methanococcus jannaschii).